The chain runs to 365 residues: 3-dehydroquinate synthase (365 aa).

NAD(+) is bound by residues 75-80 (DAENGK), 109-113 (GAATD), 133-134 (TT), K146, and K155. 3 residues coordinate Zn(2+): E188, H253, and H269.

It belongs to the sugar phosphate cyclases superfamily. Dehydroquinate synthase family. The cofactor is Co(2+). It depends on Zn(2+) as a cofactor. Requires NAD(+) as cofactor.

The protein resides in the cytoplasm. The enzyme catalyses 7-phospho-2-dehydro-3-deoxy-D-arabino-heptonate = 3-dehydroquinate + phosphate. It functions in the pathway metabolic intermediate biosynthesis; chorismate biosynthesis; chorismate from D-erythrose 4-phosphate and phosphoenolpyruvate: step 2/7. Functionally, catalyzes the conversion of 3-deoxy-D-arabino-heptulosonate 7-phosphate (DAHP) to dehydroquinate (DHQ). This chain is 3-dehydroquinate synthase, found in Corynebacterium glutamicum (strain R).